Here is a 233-residue protein sequence, read N- to C-terminus: Small ribosomal subunit protein uS2 (233 aa).

The protein belongs to the universal ribosomal protein uS2 family.

This Bacillus mycoides (strain KBAB4) (Bacillus weihenstephanensis) protein is Small ribosomal subunit protein uS2.